Here is a 400-residue protein sequence, read N- to C-terminus: Phosphoglycerate kinase (400 aa).

Residues 24–26 (DFN), R40, 63–66 (HFGR), R121, and R154 each bind substrate. ATP-binding positions include K205, G296, E327, and 356–359 (GGDS).

This sequence belongs to the phosphoglycerate kinase family. As to quaternary structure, monomer.

The protein localises to the cytoplasm. It carries out the reaction (2R)-3-phosphoglycerate + ATP = (2R)-3-phospho-glyceroyl phosphate + ADP. Its pathway is carbohydrate degradation; glycolysis; pyruvate from D-glyceraldehyde 3-phosphate: step 2/5. This is Phosphoglycerate kinase from Thermosynechococcus vestitus (strain NIES-2133 / IAM M-273 / BP-1).